The following is a 355-amino-acid chain: Beta-porphyranase C (355 aa).

A signal peptide spans methionine 1 to alanine 18. A lipid anchor (N-palmitoyl cysteine) is attached at cysteine 19. Cysteine 19 carries the S-diacylglycerol cysteine lipid modification. The segment at serine 22 to aspartate 72 is disordered. Positions glutamine 39–glycine 54 are enriched in basic and acidic residues. Residues aspartate 71 to leucine 355 enclose the GH16 domain. Tryptophan 110, glutamate 208, and glutamate 213 together coordinate substrate. Glutamate 208 (nucleophile) is an active-site residue. The active-site Proton donor is the glutamate 213.

It belongs to the glycosyl hydrolase 16 family.

It localises to the cell outer membrane. It catalyses the reaction Hydrolysis of beta-D-galactopyranose-(1-&gt;4)-alpha-L-galactopyranose-6-sulfate linkages in porphyran.. Cleaves the sulfated polysaccharide porphyran at the (1-&gt;4) linkages between beta-D-galactopyranose and alpha-L-galactopyranose-6-sulfate, forming mostly the disaccharide alpha-L-galactopyranose-6-sulfate-(1-&gt;3)-beta-D-galactose. This is Beta-porphyranase C (porC) from Zobellia galactanivorans (strain DSM 12802 / CCUG 47099 / CIP 106680 / NCIMB 13871 / Dsij).